Reading from the N-terminus, the 303-residue chain is Growth/differentiation factor 15 (303 aa).

The first 30 residues, 1–30 (MALRALHAQPTGGPQLRFLLFLLLLLLLLS), serve as a signal peptide directing secretion. The propeptide occupies 31–188 (WPSQGDALAL…LRSAAGRGRR (158 aa)). N-linked (GlcNAc...) asparagine glycosylation occurs at Asn71. 4 disulfide bridges follow: Cys198/Cys205, Cys206/Cys269, Cys235/Cys300, and Cys239/Cys302.

This sequence belongs to the TGF-beta family. As to quaternary structure, homodimer; disulfide-linked. Interacts with GFRAL and RET; ligand of GFRAL, which mediates GDF15 internalization and cellular signaling through interaction with RET via the formation of a 2:2:2 ternary complex composed of GDF15, GFRAL and RET. In terms of tissue distribution, detected in plasma (at protein level).

Its subcellular location is the secreted. In terms of biological role, hormone produced in response to various stresses to confer information about those stresses to the brain, and trigger an aversive response, characterized by nausea and/or loss of appetite. The aversive response is both required to reduce continuing exposure to those stresses at the time of exposure and to promote avoidance behavior in the future. Acts by binding to its receptor, GFRAL, activating GFRAL-expressing neurons localized in the area postrema and nucleus tractus solitarius of the brainstem. It then triggers the activation of neurons localized within the parabrachial nucleus and central amygdala, which constitutes part of the 'emergency circuit' that shapes responses to stressful conditions. The GDF15-GFRAL signal induces expression of genes involved in metabolism, such as lipid metabolism in adipose tissues. Contributes to the effect of metformin, an anti-diabetic drug, on appetite reduction and weight loss: produced in the kidney in response to metformin treatment, thereby activating the GDF15-GFRAL response, leading to reduced appetite and weight. Required for avoidance behavior in response to food allergens: induced downstream of mast cell activation to promote aversion and minimize harmful effects of exposure to noxious substances. Produced in response to anticancer drugs, such as camptothecin or cisplatin, promoting nausea and contributing to malnutrition. Overproduced in many cancers, promoting anorexia in cancer (cachexia). Responsible for the risk of nausea during pregnancy: high levels of GDF15 during pregnancy, mostly originating from embryos, are associated with increased nausea. Maternal sensitivity to nausea is probably determined by pre-pregnancy exposure to GDF15, females with naturally high level of GDF15 being less susceptible to nausea than female rats with low levels of GDF15 before pregnancy. Promotes metabolic adaptation in response to systemic inflammation caused by bacterial and viral infections in order to promote tissue tolerance and prevent tissue damage. Required for tissue tolerance in response to myocardial infarction by acting as an inhibitor of leukocyte integring activation, thereby protecting against cardiac rupture. Inhibits growth hormone signaling on hepatocytes. The chain is Growth/differentiation factor 15 from Rattus norvegicus (Rat).